Consider the following 351-residue polypeptide: Uroporphyrinogen decarboxylase (351 aa).

Substrate-binding positions include Arg-25–Arg-29, Asp-74, Tyr-151, Ser-206, and His-325.

The protein belongs to the uroporphyrinogen decarboxylase family. As to quaternary structure, homodimer.

The protein localises to the cytoplasm. The catalysed reaction is uroporphyrinogen III + 4 H(+) = coproporphyrinogen III + 4 CO2. It functions in the pathway porphyrin-containing compound metabolism; protoporphyrin-IX biosynthesis; coproporphyrinogen-III from 5-aminolevulinate: step 4/4. Functionally, catalyzes the decarboxylation of four acetate groups of uroporphyrinogen-III to yield coproporphyrinogen-III. This chain is Uroporphyrinogen decarboxylase, found in Chlorobium chlorochromatii (strain CaD3).